A 508-amino-acid chain; its full sequence is Zinc finger CCCH-type with G patch domain-containing protein (508 aa).

The C3H1-type zinc finger occupies 154-177 (PCNYYLEGECRFDETRCRYSHGAL). A disordered region spans residues 253–279 (DDELSSDSEETNETDGSDAANESDMDD). The region spanning 309–355 (TRGIGSKLMASMGYIHGTGLGSDGRGIVTPVSAQILPQGRSLDACME) is the G-patch domain. Polar residues predominate over residues 486-495 (QAQESSLSKE). The disordered stretch occupies residues 486 to 508 (QAQESSLSKEQQTRKSKNKMFEF). The segment covering 499–508 (RKSKNKMFEF) has biased composition (basic residues).

Its subcellular location is the nucleus. In terms of biological role, transcription repressor. The protein is Zinc finger CCCH-type with G patch domain-containing protein of Drosophila virilis (Fruit fly).